Here is a 120-residue protein sequence, read N- to C-terminus: Ribosome-binding factor A (120 aa).

The protein belongs to the RbfA family. In terms of assembly, monomer. Binds 30S ribosomal subunits, but not 50S ribosomal subunits or 70S ribosomes.

It is found in the cytoplasm. Its function is as follows. One of several proteins that assist in the late maturation steps of the functional core of the 30S ribosomal subunit. Associates with free 30S ribosomal subunits (but not with 30S subunits that are part of 70S ribosomes or polysomes). Required for efficient processing of 16S rRNA. May interact with the 5'-terminal helix region of 16S rRNA. The polypeptide is Ribosome-binding factor A (Chlamydia felis (strain Fe/C-56) (Chlamydophila felis)).